A 180-amino-acid chain; its full sequence is Regulator of G-protein signaling 8 (180 aa).

At Ser26 the chain carries Phosphoserine. An RGS domain is found at 56-171 (SFDVLLSHKY…FLRSKMYLDL (116 aa)).

As to quaternary structure, interacts with GNAO1. Interacts with GNAI3.

It localises to the cell membrane. It is found in the membrane. Its subcellular location is the perikaryon. The protein resides in the cell projection. The protein localises to the dendrite. It localises to the nucleus. Its function is as follows. Regulates G protein-coupled receptor signaling cascades, including signaling via muscarinic acetylcholine receptor CHRM2 and dopamine receptor DRD2. Inhibits signal transduction by increasing the GTPase activity of G protein alpha subunits, thereby driving them into their inactive GDP-bound form. Modulates the activity of potassium channels that are activated in response to DRD2 and CHRM2 signaling. This is Regulator of G-protein signaling 8 (RGS8) from Homo sapiens (Human).